We begin with the raw amino-acid sequence, 311 residues long: tRNA pseudouridine synthase B (311 aa).

The active-site Nucleophile is the D49.

The protein belongs to the pseudouridine synthase TruB family. Type 1 subfamily.

The catalysed reaction is uridine(55) in tRNA = pseudouridine(55) in tRNA. Responsible for synthesis of pseudouridine from uracil-55 in the psi GC loop of transfer RNAs. The polypeptide is tRNA pseudouridine synthase B (Actinobacillus succinogenes (strain ATCC 55618 / DSM 22257 / CCUG 43843 / 130Z)).